Reading from the N-terminus, the 219-residue chain is Ribose-5-phosphate isomerase A (219 aa).

Residues 28-31, 81-84, and 94-97 contribute to the substrate site; these read TGST, DGAD, and KGGG. The active-site Proton acceptor is the Glu-103. Lys-121 is a binding site for substrate.

It belongs to the ribose 5-phosphate isomerase family. As to quaternary structure, homodimer.

It carries out the reaction aldehydo-D-ribose 5-phosphate = D-ribulose 5-phosphate. The protein operates within carbohydrate degradation; pentose phosphate pathway; D-ribose 5-phosphate from D-ribulose 5-phosphate (non-oxidative stage): step 1/1. Catalyzes the reversible conversion of ribose-5-phosphate to ribulose 5-phosphate. The sequence is that of Ribose-5-phosphate isomerase A from Shewanella loihica (strain ATCC BAA-1088 / PV-4).